Consider the following 316-residue polypeptide: Ribose-phosphate pyrophosphokinase (316 aa).

ATP-binding positions include 42–44 (DGE) and 101–102 (RQ). Positions 135 and 174 each coordinate Mg(2+). The active site involves K197. D-ribose 5-phosphate is bound by residues R199, D223, and 227 to 231 (DTAGT).

The protein belongs to the ribose-phosphate pyrophosphokinase family. Class I subfamily. As to quaternary structure, homohexamer. Requires Mg(2+) as cofactor.

The protein localises to the cytoplasm. It catalyses the reaction D-ribose 5-phosphate + ATP = 5-phospho-alpha-D-ribose 1-diphosphate + AMP + H(+). The protein operates within metabolic intermediate biosynthesis; 5-phospho-alpha-D-ribose 1-diphosphate biosynthesis; 5-phospho-alpha-D-ribose 1-diphosphate from D-ribose 5-phosphate (route I): step 1/1. Functionally, involved in the biosynthesis of the central metabolite phospho-alpha-D-ribosyl-1-pyrophosphate (PRPP) via the transfer of pyrophosphoryl group from ATP to 1-hydroxyl of ribose-5-phosphate (Rib-5-P). The polypeptide is Ribose-phosphate pyrophosphokinase (Halalkalibacterium halodurans (strain ATCC BAA-125 / DSM 18197 / FERM 7344 / JCM 9153 / C-125) (Bacillus halodurans)).